A 109-amino-acid chain; its full sequence is Larval cuticle protein 1 (109 aa).

Positions 1–14 are cleaved as a signal peptide; sequence MILVALALVALAVA. The Chitin-binding type R&amp;R domain maps to 34–107; sequence EGSYQFGFET…AEGSSIPKPA (74 aa).

Functionally, component of the cuticle of the larva of Helicoverpa armigera. The polypeptide is Larval cuticle protein 1 (LCP1) (Helicoverpa armigera (Cotton bollworm)).